The sequence spans 198 residues: dTTP/UTP pyrophosphatase (198 aa).

D72 serves as the catalytic Proton acceptor.

This sequence belongs to the Maf family. YhdE subfamily. The cofactor is a divalent metal cation.

The protein localises to the cytoplasm. The catalysed reaction is dTTP + H2O = dTMP + diphosphate + H(+). It catalyses the reaction UTP + H2O = UMP + diphosphate + H(+). Its function is as follows. Nucleoside triphosphate pyrophosphatase that hydrolyzes dTTP and UTP. May have a dual role in cell division arrest and in preventing the incorporation of modified nucleotides into cellular nucleic acids. This Pseudomonas fluorescens (strain Pf0-1) protein is dTTP/UTP pyrophosphatase.